Here is a 255-residue protein sequence, read N- to C-terminus: CD320 antigen (255 aa).

Residues 1 to 29 form the signal peptide; it reads MNGWVARGLARRAAALGLGLRVLLCFGLC. Over 30–203 the chain is Extracellular; it reads LEIAPTPIQT…SVQSGNRNVY (174 aa). 2 consecutive LDL-receptor class A domains span residues 52–89 and 120–157; these read SCPP…EECG and SCPE…LGCG. 6 cysteine pairs are disulfide-bonded: Cys-53/Cys-66, Cys-60/Cys-79, Cys-73/Cys-88, Cys-121/Cys-134, Cys-128/Cys-147, and Cys-141/Cys-156. Ca(2+) contacts are provided by Trp-71, Asp-74, Asp-76, Asp-78, Asp-84, and Glu-85. Positions 139, 142, 144, 146, 152, and 153 each coordinate Ca(2+). Asn-177 and Asn-183 each carry an N-linked (GlcNAc...) asparagine glycan. The chain crosses the membrane as a helical span at residues 204–224; sequence GIIAAVAVLSISLAAGILFAL. Residues 225-255 lie on the Cytoplasmic side of the membrane; sequence SRLCAQGCLAPLGLLVSMKGSLQPEKKTSVL.

Interacts (via LDL-receptor class A domains) with TCN2.

It is found in the cell membrane. Receptor for transcobalamin saturated with cobalamin (TCbl). Plays an important role in cobalamin uptake. Plasma membrane protein that is expressed on follicular dendritic cells (FDC) and mediates interaction with germinal center B cells. Functions as a costimulator to promote B cell responses to antigenic stimuli; promotes B cell differentiation and proliferation. Germinal center-B (GC-B) cells differentiate into memory B-cells and plasma cells (PC) through interaction with T-cells and follicular dendritic cells (FDC). CD320 augments the proliferation of PC precursors generated by IL-10. The polypeptide is CD320 antigen (CD320) (Bos taurus (Bovine)).